We begin with the raw amino-acid sequence, 478 residues long: E3 ubiquitin-protein ligase makorin-1 (478 aa).

3 C3H1-type zinc fingers span residues 51 to 78 (WTKQVTCRYFMHGVCKKGNNCRYSHDLS), 80 to 107 (SQSAMVCRYYQRGCCAYGDRCRYEHTKP), and 204 to 231 (EMKKQLCPYAAVGECRYGENCVYLHGDA). Residues 232–259 (CDMCGLQVLHPVDAAQRSQHIKSCIEAH) form a makorin-type Cys-His region. The RING-type zinc finger occupies 277-331 (CGICMEVVYEKANPSERRFGILSNCNHTYCLKCIRKWRSAKQFESKIIKSCPECR). A C3H1-type 4 zinc finger spans residues 360 to 389 (AMSNKPCRYFDEGRGSCPFGGNCFYKHAYP).

As to quaternary structure, interacts with p53/TP53 and CDKN1A. Interacts with TERT, modulating telomere length homeostasis. In terms of processing, auto-ubiquitinated; which leads to proteasomal degradation.

It catalyses the reaction S-ubiquitinyl-[E2 ubiquitin-conjugating enzyme]-L-cysteine + [acceptor protein]-L-lysine = [E2 ubiquitin-conjugating enzyme]-L-cysteine + N(6)-ubiquitinyl-[acceptor protein]-L-lysine.. It participates in protein modification; protein ubiquitination. In terms of biological role, E3 ubiquitin ligase catalyzing the covalent attachment of ubiquitin moieties onto substrate proteins. These substrates include FILIP1, p53/TP53, CDKN1A and TERT. Keeps cells alive by suppressing p53/TP53 under normal conditions, but stimulates apoptosis by repressing CDKN1A under stress conditions. Acts as a negative regulator of telomerase. Has negative and positive effects on RNA polymerase II-dependent transcription. The sequence is that of E3 ubiquitin-protein ligase makorin-1 (MKRN1) from Notamacropus eugenii (Tammar wallaby).